The chain runs to 426 residues: Adenylosuccinate synthetase (426 aa).

Residues 14 to 20 (GDEGKGK) and 42 to 44 (GHT) contribute to the GTP site. Asp15 serves as the catalytic Proton acceptor. Mg(2+) is bound by residues Asp15 and Gly42. Residues 15-18 (DEGK), 40-43 (NAGH), Thr130, Arg144, Gln224, Thr239, and Arg303 contribute to the IMP site. His43 acts as the Proton donor in catalysis. 299-305 (TVTKRPR) lines the substrate pocket. GTP contacts are provided by residues Arg305, 331-333 (LID), and 413-415 (SVG).

Belongs to the adenylosuccinate synthetase family. As to quaternary structure, homodimer. Mg(2+) is required as a cofactor.

It is found in the cytoplasm. The catalysed reaction is IMP + L-aspartate + GTP = N(6)-(1,2-dicarboxyethyl)-AMP + GDP + phosphate + 2 H(+). It functions in the pathway purine metabolism; AMP biosynthesis via de novo pathway; AMP from IMP: step 1/2. In terms of biological role, plays an important role in the de novo pathway of purine nucleotide biosynthesis. Catalyzes the first committed step in the biosynthesis of AMP from IMP. In Malacoplasma penetrans (strain HF-2) (Mycoplasma penetrans), this protein is Adenylosuccinate synthetase.